Consider the following 79-residue polypeptide: D-alanyl carrier protein (79 aa).

The 77-residue stretch at 1 to 77 (MSIEETVIEL…KIVQGVEELQ (77 aa)) folds into the Carrier domain. The residue at position 35 (S35) is an O-(pantetheine 4'-phosphoryl)serine.

It belongs to the DltC family. 4'-phosphopantetheine is transferred from CoA to a specific serine of apo-DCP.

It is found in the cytoplasm. It functions in the pathway cell wall biogenesis; lipoteichoic acid biosynthesis. In terms of biological role, carrier protein involved in the D-alanylation of lipoteichoic acid (LTA). The loading of thioester-linked D-alanine onto DltC is catalyzed by D-alanine--D-alanyl carrier protein ligase DltA. The DltC-carried D-alanyl group is further transferred to cell membrane phosphatidylglycerol (PG) by forming an ester bond, probably catalyzed by DltD. D-alanylation of LTA plays an important role in modulating the properties of the cell wall in Gram-positive bacteria, influencing the net charge of the cell wall. This chain is D-alanyl carrier protein, found in Streptococcus pyogenes serotype M1.